A 361-amino-acid chain; its full sequence is dTDP-glucose 4,6-dehydratase (361 aa).

NAD(+) is bound by residues 11-12, 32-35, 58-59, 80-84, and T99; these read FI, DKLT, DI, and LAAES. S84 is a substrate binding site. Residue T133 coordinates substrate. D134 serves as the catalytic Proton donor. Residues E135 and Y167 each act as proton acceptor in the active site. 167–171 contacts NAD(+); that stretch reads YSASK. N196 serves as a coordination point for substrate. N197 provides a ligand contact to NAD(+). Substrate-binding positions include 206–207, 222–224, R231, N266, and 296–300; these read KL, PIY, and DRPGH.

Belongs to the NAD(P)-dependent epimerase/dehydratase family. dTDP-glucose dehydratase subfamily. As to quaternary structure, homodimer. The cofactor is NAD(+).

The enzyme catalyses dTDP-alpha-D-glucose = dTDP-4-dehydro-6-deoxy-alpha-D-glucose + H2O. The protein operates within carbohydrate biosynthesis; dTDP-L-rhamnose biosynthesis. It functions in the pathway bacterial outer membrane biogenesis; LPS O-antigen biosynthesis. Its function is as follows. Catalyzes the dehydration of dTDP-D-glucose to form dTDP-6-deoxy-D-xylo-4-hexulose via a three-step process involving oxidation, dehydration and reduction. In Shigella flexneri, this protein is dTDP-glucose 4,6-dehydratase (rfbB).